Reading from the N-terminus, the 82-residue chain is uncharacterized protein (82 aa).

Residues 60 to 82 (YKRRRPDHMMKRNSPSYTGDHKT) form a disordered region.

This is an uncharacterized protein from Saccharomyces cerevisiae (strain ATCC 204508 / S288c) (Baker's yeast).